The sequence spans 560 residues: (E)-beta-farnesene synthase (560 aa).

Aspartate 312, aspartate 316, aspartate 457, and glutamate 465 together coordinate Mg(2+). A DDXXD motif motif is present at residues aspartate 312–aspartate 316.

The protein belongs to the terpene synthase family. Mg(2+) is required as a cofactor. The cofactor is Co(2+). It depends on Mn(2+) as a cofactor.

The protein resides in the cytoplasm. The catalysed reaction is (2E,6E)-farnesyl diphosphate = (E)-beta-farnesene + diphosphate. It functions in the pathway secondary metabolite biosynthesis; terpenoid biosynthesis. In terms of biological role, sesquiterpene cyclase catalyzing the production of beta-farnesene from farnesyl diphosphate. The polypeptide is (E)-beta-farnesene synthase (Citrus junos (Yuzu)).